The sequence spans 1284 residues: ABC multidrug transporter atrC (1284 aa).

Basic and acidic residues predominate over residues 1–11 (MKSTAESKETP). The tract at residues 1-24 (MKSTAESKETPSQDESTTSVPCTE) is disordered. A run of 6 helical transmembrane segments spans residues 55–75 (AVAILAACASGAGIALQNLIF), 99–119 (AAELALYFVYLGIARLVLSYT), 178–198 (IGLLFQGLAAFVTAFIIAFVV), 203–223 (TLICICIPVATIGTTGVVAAV), 282–302 (LLGLLFSAEYTIIYLGYGLAF), and 320–340 (IFTVLLSVVIASINLTLLAPY). Residues 55–346 (AVAILAACAS…LAPYSIEFSR (292 aa)) enclose the ABC transmembrane type-1 1 domain. The ABC transporter 1 domain occupies 381 to 626 (VELENVTFSY…DGVYAGLVKI (246 aa)). Asn385 and Asn401 each carry an N-linked (GlcNAc...) asparagine glycan. 416–423 (GQSGSGKS) provides a ligand contact to ATP. Asn488 and Asn632 each carry an N-linked (GlcNAc...) asparagine glycan. 2 helical membrane passes run 705 to 725 (LVVLLGCLGGCAMYPGQAILM) and 745 to 765 (FYASMLIVLAAGCLICYLAVG). Residues 705–992 (LVVLLGCLGG…LFQWSTSITK (288 aa)) enclose the ABC transmembrane type-1 2 domain. Asn800 is a glycosylation site (N-linked (GlcNAc...) asparagine). 4 consecutive transmembrane segments (helical) span residues 824–844 (IALVVIAVLQVVTCGILAIAF), 846–866 (WKLGLVVVFGGIPPLVGAGMV), 931–951 (MICFGLTQCIEYWFQALGFWY), and 955–975 (LVSLGETSMYSFFVAFLSVFF). N-linked (GlcNAc...) asparagine glycosylation occurs at Asn995. In terms of domain architecture, ABC transporter 2 spans 1027–1280 (IAMDNVRFSY…GGLYRRMCEA (254 aa)). 1062 to 1069 (GSSGCGKS) contacts ATP. The N-linked (GlcNAc...) asparagine glycan is linked to Asn1122.

The protein belongs to the ABC transporter superfamily. ABCB family. Multidrug resistance exporter (TC 3.A.1.201) subfamily.

It is found in the cell membrane. In terms of biological role, pleiotropic ABC efflux transporter involved in the protection of the cells against a wide range of toxic compounds. In Emericella nidulans (strain FGSC A4 / ATCC 38163 / CBS 112.46 / NRRL 194 / M139) (Aspergillus nidulans), this protein is ABC multidrug transporter atrC.